The primary structure comprises 129 residues: Small ribosomal subunit protein uS8 (129 aa).

The protein belongs to the universal ribosomal protein uS8 family. In terms of assembly, part of the 30S ribosomal subunit.

In terms of biological role, one of the primary rRNA binding proteins, it binds directly to 16S rRNA central domain where it helps coordinate assembly of the platform of the 30S subunit. The protein is Small ribosomal subunit protein uS8 of Thermofilum pendens (strain DSM 2475 / Hrk 5).